The sequence spans 689 residues: MGKNFLLEIGTEEMPAHFLDPAIKQIYDFSLNYFENQKISFEDIKTWATPRRLVVYIKNLSEKQESQEEEIRGPAAHVGYKNGVWTEVAKRFAEQYGASLEALYIKETPRGKYIFLKRIKEGVNTLEILPDYAVSLLKNIRFPKMMKWGNVDFYFGRPIRWIVALYGSEEVKFEVAGVKSSRYSRPPRFLPQTPIEIKDADSYIDLMKENYVIVDQNERKNEILRHIKEIANSNSLTLSYDEDLLEEVTYLVEYPTALLGQFDSKYLTLPEIVLIVTMEKKQRYFPLRDKEGNLINKFIVIRNGTENYKEVVIQGNEKVLKARLADAEYYYNEDIRCPLEKYSEKLSGIIFQEQLGTIKDKVERVRILVREIANILELSTEEKEILERAVDLYKADLGTLMVSEYPELHGIMGSIYAKISGEREPIPQIIGEYIYPRTLEDQIPKNPLSTVLGIADRVDSLTGYFALDLFPTGSEDPIGLRRISGGLLRLLLETDFKLNLRNLFMKSFEVYKFSDKCPISQIEKGMLFIGQRLRNLLLDKYPNDIVEAVMEVGYDELWKLKRRVDFIREFKEKDPYEKLKRALNRLYRILPKDFSPKEINENLFNSPFEKELYRDYVKINKEISKEILKGNYKVLLGYDFLKEFSDHIESFFDHVLVMSPNEEEKLNRLSLLFAIKSLFWEVLDWSKLN.

This sequence belongs to the class-II aminoacyl-tRNA synthetase family. In terms of assembly, tetramer of two alpha and two beta subunits.

It localises to the cytoplasm. It carries out the reaction tRNA(Gly) + glycine + ATP = glycyl-tRNA(Gly) + AMP + diphosphate. The sequence is that of Glycine--tRNA ligase beta subunit from Dictyoglomus turgidum (strain DSM 6724 / Z-1310).